Here is an 87-residue protein sequence, read N- to C-terminus: U3-theraphotoxin-Hhn1e (87 aa).

Residues 1–24 (MVNMKASMFLTFAGLVLLFVVCYA) form the signal peptide. The propeptide occupies 25 to 52 (SESEEKEFPKGMLSSIFAVDNDFKQEER). Intrachain disulfides connect Cys-54–Cys-67, Cys-61–Cys-72, and Cys-66–Cys-79.

Belongs to the neurotoxin 10 (Hwtx-1) family. 51 (Hntx-8) subfamily. Hntx-8 sub-subfamily. As to expression, expressed by the venom gland.

Its subcellular location is the secreted. Its function is as follows. Ion channel inhibitor. This Cyriopagopus hainanus (Chinese bird spider) protein is U3-theraphotoxin-Hhn1e.